We begin with the raw amino-acid sequence, 243 residues long: Probable transcriptional regulator ycf27 (243 aa).

The region spanning Lys7 to Leu120 is the Response regulatory domain. Asp56 is modified (4-aspartylphosphate). The segment at residues Asp76–Gly94 is a DNA-binding region (H-T-H motif). Positions Ser135–Arg236 form a DNA-binding region, ompR/PhoB-type.

The protein resides in the plastid. The protein localises to the chloroplast. Its function is as follows. Probable promoter-specific protein mediating the interaction between DNA and RNA polymerase. The protein is Probable transcriptional regulator ycf27 (ycf27) of Porphyra purpurea (Red seaweed).